The chain runs to 350 residues: Phosphotriesterase-related protein (350 aa).

A divalent metal cation contacts are provided by H22, H24, E169, H201, H230, and D298.

It belongs to the metallo-dependent hydrolases superfamily. Phosphotriesterase family. The cofactor is a divalent metal cation.

The protein is Phosphotriesterase-related protein of Drosophila ananassae (Fruit fly).